Consider the following 543-residue polypeptide: Chaperonin GroEL 2 (543 aa).

ATP contacts are provided by residues 29–32 (TLGP), 86–90 (DGTTT), glycine 413, 478–480 (NAA), and aspartate 494.

Belongs to the chaperonin (HSP60) family. In terms of assembly, forms a cylinder of 14 subunits composed of two heptameric rings stacked back-to-back. Interacts with the co-chaperonin GroES.

It is found in the cytoplasm. The enzyme catalyses ATP + H2O + a folded polypeptide = ADP + phosphate + an unfolded polypeptide.. Together with its co-chaperonin GroES, plays an essential role in assisting protein folding. The GroEL-GroES system forms a nano-cage that allows encapsulation of the non-native substrate proteins and provides a physical environment optimized to promote and accelerate protein folding. The sequence is that of Chaperonin GroEL 2 from Thermosynechococcus vestitus (strain NIES-2133 / IAM M-273 / BP-1).